Consider the following 514-residue polypeptide: Cytochrome P450 71AP13 (514 aa).

The helical transmembrane segment at His-20–Tyr-37 threads the bilayer. Residues Asn-127 and Asn-184 are each glycosylated (N-linked (GlcNAc...) asparagine). Cys-455 provides a ligand contact to heme.

It belongs to the cytochrome P450 family. The cofactor is heme. As to expression, expressed in fruit kernel, seedlings, leaves and stems.

It localises to the membrane. The protein is Cytochrome P450 71AP13 of Prunus mume (Japanese apricot).